We begin with the raw amino-acid sequence, 86 residues long: Neurotoxin-like protein NTL2 (86 aa).

Positions 1–21 (MKTLLLSLVVVTIVCLDLGYT) are cleaved as a signal peptide. Disulfide bonds link Cys-24–Cys-45, Cys-38–Cys-63, Cys-67–Cys-78, and Cys-79–Cys-84.

Belongs to the three-finger toxin family. Short-chain subfamily. Orphan group I sub-subfamily. As to expression, expressed by the venom gland.

The protein localises to the secreted. This Naja atra (Chinese cobra) protein is Neurotoxin-like protein NTL2.